We begin with the raw amino-acid sequence, 530 residues long: UDP-N-acetylmuramoyl-L-alanyl-D-glutamate--2,6-diaminopimelate ligase (530 aa).

S21 is a binding site for UDP-N-acetyl-alpha-D-muramoyl-L-alanyl-D-glutamate. Residue 99–105 participates in ATP binding; that stretch reads GTNGKSS. UDP-N-acetyl-alpha-D-muramoyl-L-alanyl-D-glutamate contacts are provided by residues 145 to 146, S172, Q178, and R180; that span reads TT. K212 bears the N6-carboxylysine mark. The region spanning 221-269 is the RPE1 insert domain; sequence FKPAYREEFKGDTEHSTTAYILVREDASTGSTSKLLLEAKFGKMSTEYL. Residues R422, 446–449, G496, and E500 each bind meso-2,6-diaminopimelate; that span reads DNPR. Positions 446 to 449 match the Meso-diaminopimelate recognition motif motif; that stretch reads DNPR.

It belongs to the MurCDEF family. MurE subfamily. Requires Mg(2+) as cofactor. In terms of processing, carboxylation is probably crucial for Mg(2+) binding and, consequently, for the gamma-phosphate positioning of ATP.

It localises to the cytoplasm. The catalysed reaction is UDP-N-acetyl-alpha-D-muramoyl-L-alanyl-D-glutamate + meso-2,6-diaminopimelate + ATP = UDP-N-acetyl-alpha-D-muramoyl-L-alanyl-gamma-D-glutamyl-meso-2,6-diaminopimelate + ADP + phosphate + H(+). It participates in cell wall biogenesis; peptidoglycan biosynthesis. In terms of biological role, catalyzes the addition of meso-diaminopimelic acid to the nucleotide precursor UDP-N-acetylmuramoyl-L-alanyl-D-glutamate (UMAG) in the biosynthesis of bacterial cell-wall peptidoglycan. The chain is UDP-N-acetylmuramoyl-L-alanyl-D-glutamate--2,6-diaminopimelate ligase from Rickettsia felis (strain ATCC VR-1525 / URRWXCal2) (Rickettsia azadi).